Consider the following 389-residue polypeptide: Smad nuclear interacting protein 1 (389 aa).

Basic and acidic residues predominate over residues 1–10 (MKAGKSERER). The tract at residues 1–212 (MKAGKSERER…GNKNKEVPVK (212 aa)) is disordered. Residue Ser-18 is modified to Phosphoserine. Residue Lys-28 forms a Glycyl lysine isopeptide (Lys-Gly) (interchain with G-Cter in SUMO); alternate linkage. A Glycyl lysine isopeptide (Lys-Gly) (interchain with G-Cter in SUMO1); alternate cross-link involves residue Lys-28. Lys-28 is covalently cross-linked (Glycyl lysine isopeptide (Lys-Gly) (interchain with G-Cter in SUMO2); alternate). Residues 28 to 43 (KQERLSPEPVAHRRPD) show a composition bias toward basic and acidic residues. 2 positions are modified to phosphoserine: Ser-33 and Ser-48. Low complexity predominate over residues 54-72 (AESGSAGHRGSRARGASRS). Basic residues predominate over residues 73 to 95 (PAKKKSKSSGRRSKSPRTKRSRS). Ser-95 is modified (phosphoserine). Composition is skewed to basic and acidic residues over residues 103–138 (VKQE…ERDR) and 147–163 (RSSD…DRDS). Residue Lys-104 forms a Glycyl lysine isopeptide (Lys-Gly) (interchain with G-Cter in SUMO2) linkage. Position 149 is a phosphoserine (Ser-149). A coiled-coil region spans residues 166 to 197 (LQAQEEERDFNNARRREHRQQNESAGAEAQEV). Residue Lys-214 forms a Glycyl lysine isopeptide (Lys-Gly) (interchain with G-Cter in SUMO2) linkage. An FHA domain is found at 272–335 (YLLGRHRRIA…NGTFLNNKRI (64 aa)). The span at 363–373 (ESSDTSELDRK) shows a compositional bias: basic and acidic residues. Residues 363–389 (ESSDTSELDRKEDEDEEEEEEMVSDSS) form a disordered region. Residues 374–389 (EDEDEEEEEEMVSDSS) are compositionally biased toward acidic residues. Ser-386 bears the Phosphoserine mark.

Component of activated spliceosome complexes. Component of the minor spliceosome, which splices U12-type introns. Binds SMAD4 and CREBBP/EP300. Binds the SMAD1/OAZ1/PSMB4 complex. Interacts with DROSHA and SMARCA4. Component of the SNARP complex which consists at least of SNIP1, SNW1, THRAP3, BCLAF1 and PNN. In terms of processing, degraded by the proteasome upon binding to the SMAD1/OAZ1/PSMB4 complex.

Its subcellular location is the nucleus. Functionally, required for pre-mRNA splicing as component of the spliceosome. As a component of the minor spliceosome, involved in the splicing of U12-type introns in pre-mRNAs. Down-regulates NF-kappa-B signaling by competing with RELA for CREBBP/EP300 binding. Involved in the microRNA (miRNA) biogenesis. May be involved in cyclin-D1/CCND1 mRNA stability through the SNARP complex which associates with both the 3'end of the CCND1 gene and its mRNA. This Rattus norvegicus (Rat) protein is Smad nuclear interacting protein 1 (Snip1).